The chain runs to 147 residues: Hemoglobin larval subunit beta-1 (147 aa).

A Globin domain is found at H3 to F147. 2 residues coordinate heme b: H64 and H93.

The protein belongs to the globin family. In terms of assembly, heterotetramer of two alpha chains and two beta chains. Red blood cells.

This is a larval (tadpole) beta-globin. The protein is Hemoglobin larval subunit beta-1 of Xenopus laevis (African clawed frog).